Consider the following 225-residue polypeptide: Thymidine kinase (225 aa).

8–15 serves as a coordination point for ATP; it reads GPMFSGKT. Glu-92 serves as the catalytic Proton acceptor. Residue Tyr-122 participates in substrate binding. Zn(2+) is bound by residues Cys-147 and Cys-150. Residue 167 to 171 participates in substrate binding; sequence KILVG. Zn(2+)-binding residues include Cys-180 and Cys-183. The span at 197-207 shows a compositional bias: polar residues; that stretch reads SEQINNQTELS. The segment at 197 to 225 is disordered; it reads SEQINNQTELSEPTRQKESLKIKKRRIDS. Residues 208–225 are compositionally biased toward basic and acidic residues; that stretch reads EPTRQKESLKIKKRRIDS.

This sequence belongs to the thymidine kinase family.

It catalyses the reaction thymidine + ATP = dTMP + ADP + H(+). In Acanthamoeba polyphaga mimivirus (APMV), this protein is Thymidine kinase (TK).